The chain runs to 101 residues: Small ribosomal subunit protein uS10 (101 aa).

Belongs to the universal ribosomal protein uS10 family. As to quaternary structure, part of the 30S ribosomal subunit.

In terms of biological role, involved in the binding of tRNA to the ribosomes. This is Small ribosomal subunit protein uS10 from Anaeromyxobacter dehalogenans (strain 2CP-C).